Here is a 375-residue protein sequence, read N- to C-terminus: Succinyl-diaminopimelate desuccinylase (375 aa).

Position 66 (H66) interacts with Zn(2+). The active site involves D68. Zn(2+) is bound at residue D99. The Proton acceptor role is filled by E133. Positions 134, 162, and 348 each coordinate Zn(2+).

The protein belongs to the peptidase M20A family. DapE subfamily. In terms of assembly, homodimer. The cofactor is Zn(2+). Co(2+) is required as a cofactor.

The catalysed reaction is N-succinyl-(2S,6S)-2,6-diaminopimelate + H2O = (2S,6S)-2,6-diaminopimelate + succinate. Its pathway is amino-acid biosynthesis; L-lysine biosynthesis via DAP pathway; LL-2,6-diaminopimelate from (S)-tetrahydrodipicolinate (succinylase route): step 3/3. Its function is as follows. Catalyzes the hydrolysis of N-succinyl-L,L-diaminopimelic acid (SDAP), forming succinate and LL-2,6-diaminopimelate (DAP), an intermediate involved in the bacterial biosynthesis of lysine and meso-diaminopimelic acid, an essential component of bacterial cell walls. The protein is Succinyl-diaminopimelate desuccinylase of Buchnera aphidicola subsp. Acyrthosiphon pisum (strain 5A).